A 365-amino-acid chain; its full sequence is MSEEREAPGPLASSSAGLGAEVGQEEVPGGAGPARLLLLPSDSDGPPKKRLRSEAEPGSVRLEERLYSVLCCAVCLDLPKASVYQCTNGHLMCAGCFIHLLADARLKEEQATCPNCRCEISKSLCCRNLAVEKAISELPSDCGFCLKQFPRSLLERHKKEECQDRVTQCKYKRIGCPWQGPYHELTVHESECCHPTKTGNELMEILDEMDQTHKKEMQLYNSIFSLLSFEKIGYTEVQFRPYRTDDFITRLYYETPRFTVLNQTWVLKARVNDSERNPNLSCKRTLSFQLILKSKVNSPMECSFLLLKGPYDDVKIHPVIYQFVFTNENNETEYVPLPIIDSVECNKLLAAKNINLRLFIFQIQK.

The interval 1-56 (MSEEREAPGPLASSSAGLGAEVGQEEVPGGAGPARLLLLPSDSDGPPKKRLRSEAE) is disordered. An RING-type; degenerate zinc finger spans residues 72–117 (CAVCLDLPKASVYQCTNGHLMCAGCFIHLLADARLKEEQATCPNCR). The TRAF-type zinc finger occupies 113-186 (CPNCRCEISK…PWQGPYHELT (74 aa)).

Belongs to the ZFTRAF1 family. In terms of assembly, interacts with LGALS3.

It is found in the cytoplasm. The polypeptide is Zinc finger TRAF-type-containing protein 1-B (Xenopus laevis (African clawed frog)).